The primary structure comprises 213 residues: Ripening-related protein 3 (213 aa).

Residues 1-32 (MAGAMTMSRRRLSHALLLVLAILPNLAALAVA) form the signal peptide.

This sequence belongs to the kiwellin family.

The protein localises to the secreted. This is Ripening-related protein 3 from Oryza sativa subsp. japonica (Rice).